A 277-amino-acid polypeptide reads, in one-letter code: Formamidopyrimidine-DNA glycosylase (277 aa).

Residue Pro-2 is the Schiff-base intermediate with DNA of the active site. Glu-3 acts as the Proton donor in catalysis. The active-site Proton donor; for beta-elimination activity is Lys-58. His-95, Arg-113, and Arg-158 together coordinate DNA. The FPG-type zinc finger occupies 243-277 (GVYDRANQPCLRCGGVVRQIRQAGRSTYYCTGCQH). Arg-267 (proton donor; for delta-elimination activity) is an active-site residue.

This sequence belongs to the FPG family. In terms of assembly, monomer. It depends on Zn(2+) as a cofactor.

The catalysed reaction is Hydrolysis of DNA containing ring-opened 7-methylguanine residues, releasing 2,6-diamino-4-hydroxy-5-(N-methyl)formamidopyrimidine.. It catalyses the reaction 2'-deoxyribonucleotide-(2'-deoxyribose 5'-phosphate)-2'-deoxyribonucleotide-DNA = a 3'-end 2'-deoxyribonucleotide-(2,3-dehydro-2,3-deoxyribose 5'-phosphate)-DNA + a 5'-end 5'-phospho-2'-deoxyribonucleoside-DNA + H(+). Its function is as follows. Involved in base excision repair of DNA damaged by oxidation or by mutagenic agents. Acts as a DNA glycosylase that recognizes and removes damaged bases. Has a preference for oxidized purines, such as 7,8-dihydro-8-oxoguanine (8-oxoG). Has AP (apurinic/apyrimidinic) lyase activity and introduces nicks in the DNA strand. Cleaves the DNA backbone by beta-delta elimination to generate a single-strand break at the site of the removed base with both 3'- and 5'-phosphates. The chain is Formamidopyrimidine-DNA glycosylase from Dechloromonas aromatica (strain RCB).